We begin with the raw amino-acid sequence, 257 residues long: Imidazole glycerol phosphate synthase subunit HisF (257 aa).

Catalysis depends on residues Asp-11 and Asp-130.

It belongs to the HisA/HisF family. As to quaternary structure, heterodimer of HisH and HisF.

Its subcellular location is the cytoplasm. The catalysed reaction is 5-[(5-phospho-1-deoxy-D-ribulos-1-ylimino)methylamino]-1-(5-phospho-beta-D-ribosyl)imidazole-4-carboxamide + L-glutamine = D-erythro-1-(imidazol-4-yl)glycerol 3-phosphate + 5-amino-1-(5-phospho-beta-D-ribosyl)imidazole-4-carboxamide + L-glutamate + H(+). The protein operates within amino-acid biosynthesis; L-histidine biosynthesis; L-histidine from 5-phospho-alpha-D-ribose 1-diphosphate: step 5/9. Functionally, IGPS catalyzes the conversion of PRFAR and glutamine to IGP, AICAR and glutamate. The HisF subunit catalyzes the cyclization activity that produces IGP and AICAR from PRFAR using the ammonia provided by the HisH subunit. The chain is Imidazole glycerol phosphate synthase subunit HisF from Trichormus variabilis (strain ATCC 29413 / PCC 7937) (Anabaena variabilis).